The sequence spans 716 residues: Putative cuticle collagen 99 (716 aa).

2 disordered regions span residues 85–122 and 183–472; these read LPSS…PVGP and PPGP…SLVA. Triple-helical region regions lie at residues 179 to 238, 265 to 298, and 302 to 330; these read GMPG…KGDR, LPGP…FDGE, and GPKG…EKGD. Residues 266–277 show a composition bias toward pro residues; it reads PGPPGPPGPPGP. Positions 280-290 are enriched in basic and acidic residues; it reads RDGRHGLKGDR. The segment covering 349–358 has biased composition (pro residues); that stretch reads PGPPGPPGPP. Triple-helical region regions lie at residues 385–411 and 422–467; these read GPPG…AGAA and GPPG…GRHG. Positions 389–401 are enriched in basic and acidic residues; the sequence is EKGERGERGEPGD. Positions 402–422 are enriched in low complexity; that stretch reads RGLPGAAGAANLLNGGKALVG. The span at 429-444 shows a compositional bias: basic and acidic residues; it reads RDGRPGDKGEKGEQGL. The N-linked (GlcNAc...) asparagine glycan is linked to Asn-474. The interval 503 to 716 is disordered; that stretch reads KNVIPGPPGP…GAETRPPVTD (214 aa). 3 triple-helical region regions span residues 507–557, 566–603, and 605–664; these read PGPP…QPGA, GPRG…PPGP, and GLRG…PGLD. The segment covering 568–577 has biased composition (pro residues); that stretch reads RGPPGLPGPP.

Belongs to the cuticular collagen family. Collagen polypeptide chains are complexed within the cuticle by disulfide bonds and other types of covalent cross-links.

In terms of biological role, nematode cuticles are composed largely of collagen-like proteins. The cuticle functions both as an exoskeleton and as a barrier to protect the worm from its environment. The sequence is that of Putative cuticle collagen 99 (col-99) from Caenorhabditis elegans.